Consider the following 1159-residue polypeptide: WASH complex subunit 5 (1159 aa).

The protein belongs to the strumpellin family. As to quaternary structure, component of the WASH complex.

Its subcellular location is the early endosome. Acts at least in part as component of the WASH complex which seems to regulate washc1 nucleation-promoting factor (NPF) activity and is required for its membrane targeting during endosomal sorting. In Xenopus tropicalis (Western clawed frog), this protein is WASH complex subunit 5.